A 385-amino-acid polypeptide reads, in one-letter code: Lipid-A-disaccharide synthase (385 aa).

It belongs to the LpxB family.

The catalysed reaction is a lipid X + a UDP-2-N,3-O-bis[(3R)-3-hydroxyacyl]-alpha-D-glucosamine = a lipid A disaccharide + UDP + H(+). It participates in bacterial outer membrane biogenesis; LPS lipid A biosynthesis. Functionally, condensation of UDP-2,3-diacylglucosamine and 2,3-diacylglucosamine-1-phosphate to form lipid A disaccharide, a precursor of lipid A, a phosphorylated glycolipid that anchors the lipopolysaccharide to the outer membrane of the cell. This Xylella fastidiosa (strain M12) protein is Lipid-A-disaccharide synthase.